The sequence spans 112 residues: Signal peptidase complex-like protein DTM1 (112 aa).

The signal sequence occupies residues 1 to 25 (MGRDEMLRRSLVALAAAVVVTGVVT). Helical transmembrane passes span 33-53 (ATYG…WEFF) and 92-112 (MAML…YVSS).

It belongs to the SPCS1 family.

It localises to the endoplasmic reticulum membrane. Its function is as follows. Functions in tapetum development during early meiosis. May play a role in the endoplasmic reticulum (ER) membrane in the early stages of tapetum development in anthers. Seems to function after MSP1 and before UDT1. This chain is Signal peptidase complex-like protein DTM1, found in Oryza sativa subsp. japonica (Rice).